Reading from the N-terminus, the 593-residue chain is Auxin response factor 12 (593 aa).

The TF-B3 DNA-binding region spans 126-228; that stretch reads FTKVLTASDT…ELRVGIRRAR (103 aa). Residues 511-592 form the PB1 domain; the sequence is RTCTKVQMQG…MVKKIFIQKR (82 aa).

It belongs to the ARF family. As to quaternary structure, homodimers and heterodimers.

The protein resides in the nucleus. Its function is as follows. Auxin response factors (ARFs) are transcriptional factors that bind specifically to the DNA sequence 5'-TGTCTC-3' found in the auxin-responsive promoter elements (AuxREs). Could act as transcriptional activator or repressor. Formation of heterodimers with Aux/IAA proteins may alter their ability to modulate early auxin response genes expression. The polypeptide is Auxin response factor 12 (ARF12) (Arabidopsis thaliana (Mouse-ear cress)).